Consider the following 583-residue polypeptide: Atlastin-2 (583 aa).

A disordered region spans residues 1 to 44 (MAEGDEAARGQQPHQGLWRRRRTSDPSAAVNHVSSTTSLGENYE). An N-terminal hypervariable region (HVR) region spans residues 1-60 (MAEGDEAARGQQPHQGLWRRRRTSDPSAAVNHVSSTTSLGENYEDDDLVNSDEVMKKPCP). Residues 1–476 (MAEGDEAARG…NIFYAARTPA (476 aa)) lie on the Cytoplasmic side of the membrane. At Ser-24 the chain carries Phosphoserine. Residues 91–336 (DLNIVVVSVA…LVPLLLAPEN (246 aa)) form the GB1/RHD3-type G domain. The GDP site is built by Arg-104, Lys-105, Gly-106, Lys-107, Ser-108, Phe-109, Gln-175, Arg-244, and Asp-245. GTP-binding residues include Arg-104, Lys-105, Gly-106, Lys-107, Ser-108, and Phe-109. Ser-108 is a binding site for Mg(2+). 2 residues coordinate GTP: Arg-244 and Asp-245. Residues 256–284 (LEGGKQFLEKRLQVKQNQHEELQNVRKHI) are a coiled coil. Lys-270 carries the post-translational modification N6-methyllysine. GDP-binding residues include Val-303 and Asn-306. A GTP-binding site is contributed by Val-303. Residues 374–465 (MLQATAEANN…YANFIKHNDG (92 aa)) are 3HB (three-helix bundle) domain. A linker region spans residues 466-474 (KNIFYAART). A helical membrane pass occupies residues 477-497 (TLFAVMFAMYIISGLTGFIGL). At 498–499 (NS) the chain is on the lumenal side. A helical transmembrane segment spans residues 500-520 (IAVLCNLVMGLALIFLCTWAY). Over 521–583 (VKYSGEFREI…VSHHARLKTD (63 aa)) the chain is Cytoplasmic. An autoinhibitory domain region spans residues 547 to 583 (KPLGDNLMEENIRQSVTNSIKAGLTDQVSHHARLKTD).

The protein belongs to the TRAFAC class dynamin-like GTPase superfamily. GB1/RHD3 GTPase family. GB1 subfamily. Monomeric and homodimeric. The homodimer, transiently formed by two molecules on opposing membranes, is the active form mediating ER membrane fusion. Interacts with REEP5 and RTN3; these proteins are involved in endoplasmic reticulum tubular network organization. Interacts with ZFYVE27; both proteins are involved in endoplasmic reticulum tubular network organization. As to expression, expressed in peripheral tissues (at protein level).

It localises to the endoplasmic reticulum membrane. The enzyme catalyses GTP + H2O = GDP + phosphate + H(+). With its alternative C-terminus disrupting the autoinhibitory domain, this brain-specific isoform is probably more active at fusing ER membranes. Its function is as follows. Atlastin-2 (ATL2) is a membrane-anchored GTPase that mediates the GTP-dependent fusion of endoplasmic reticulum (ER) membranes, maintaining the continuous ER network. It facilitates the formation of three-way junctions where ER tubules intersect. Two atlastin-2 on neighboring ER tubules bind GTP and form loose homodimers through the GB1/RHD3-type G domains and 3HB regions. Upon GTP hydrolysis, the 3HB regions tighten, pulling the membranes together to drive their fusion. After fusion, the homodimer disassembles upon release of inorganic phosphate (Pi). Subsequently, GDP dissociates, resetting the monomers to a conformation ready for a new fusion cycle. The chain is Atlastin-2 from Homo sapiens (Human).